The primary structure comprises 331 residues: Rho GTPase-activating protein 5 (331 aa).

A CRIB domain is found at 3 to 16 (IGGPTNIRHVAHVT). A Rho-GAP domain is found at 48 to 225 (VSTESMQLSY…LLKSLTEKTV (178 aa)). A compositionally biased stretch (basic and acidic residues) spans 227–251 (EREASSSVVDRRCSKEAEDGEKEKD). The interval 227–331 (EREASSSVVD…VQPPICSSNP (105 aa)) is disordered. Acidic residues predominate over residues 252-277 (NEEEEEDEEEEEEEEDEDEDEEEEGD).

Expressed in differentiating xylem cells.

It localises to the cell membrane. Its function is as follows. Acts as a GTPase activator for the Rac-type GTPase by converting it to an inactive GDP-bound state. In Arabidopsis thaliana (Mouse-ear cress), this protein is Rho GTPase-activating protein 5 (ROPGAP5).